Here is a 234-residue protein sequence, read N- to C-terminus: MDSITTLIVEDEPMLAEILVDNIKQFPQFDVIGIADKLESARKQLRLYQPQLILLDNFLPDGKGIDLIRHAVSTHYKGRIIFITADNHMETISEALRLGVFDYLIKPVHYQRLQHTLERFARYRSSLRSSEQASQLHVDALFNIQAREQTEPASAPLRGIDESTFQRVLQLFADPTVVHTADSLARILGSSKTTARRYLEQGVKNDFLEAEISYGKVGRPERIYHGKQTYPEQR.

In terms of domain architecture, Response regulatory spans 5–121 (TTLIVEDEPM…RLQHTLERFA (117 aa)). Asp56 is subject to 4-aspartylphosphate. The H-T-H motif DNA-binding region spans 181–200 (ADSLARILGSSKTTARRYLE).

In vitro CitB and the CitA kinase domain form a complex, formation of which is enhanced by ATP. In terms of processing, phosphorylated by CitA.

The protein localises to the cytoplasm. Functionally, member of the two-component regulatory system CitA/CitB essential for expression of citrate-specific fermentation genes. Phosphorylated CitB binds to two sites in the citS-citC intergenic region where it probably activates transcription of both genes. The protein is Transcriptional regulatory protein CitB (citB) of Klebsiella pneumoniae.